The primary structure comprises 629 residues: DNA mismatch repair protein MutL (629 aa).

It belongs to the DNA mismatch repair MutL/HexB family.

Functionally, this protein is involved in the repair of mismatches in DNA. It is required for dam-dependent methyl-directed DNA mismatch repair. May act as a 'molecular matchmaker', a protein that promotes the formation of a stable complex between two or more DNA-binding proteins in an ATP-dependent manner without itself being part of a final effector complex. The polypeptide is DNA mismatch repair protein MutL (Rhodospirillum rubrum (strain ATCC 11170 / ATH 1.1.1 / DSM 467 / LMG 4362 / NCIMB 8255 / S1)).